Consider the following 311-residue polypeptide: tRNA-cytidine(32) 2-sulfurtransferase (311 aa).

Positions 47-52 (SGGKDS) match the PP-loop motif motif. [4Fe-4S] cluster-binding residues include Cys122, Cys125, and Cys213.

This sequence belongs to the TtcA family. As to quaternary structure, homodimer. The cofactor is Mg(2+). [4Fe-4S] cluster serves as cofactor.

Its subcellular location is the cytoplasm. The catalysed reaction is cytidine(32) in tRNA + S-sulfanyl-L-cysteinyl-[cysteine desulfurase] + AH2 + ATP = 2-thiocytidine(32) in tRNA + L-cysteinyl-[cysteine desulfurase] + A + AMP + diphosphate + H(+). The protein operates within tRNA modification. Its function is as follows. Catalyzes the ATP-dependent 2-thiolation of cytidine in position 32 of tRNA, to form 2-thiocytidine (s(2)C32). The sulfur atoms are provided by the cysteine/cysteine desulfurase (IscS) system. This is tRNA-cytidine(32) 2-sulfurtransferase from Pectobacterium carotovorum subsp. carotovorum (strain PC1).